The chain runs to 98 residues: MALTKAEMAEHLFETLGINKRVAKEMVETFFEEIRSALESGEQVKLSGFGNFDLRDKNQRPGRNPKTGEDIPISARRVVTFRPGQKLKSRVESSNSEK.

Positions 49–71 are disordered; that stretch reads FGNFDLRDKNQRPGRNPKTGEDI.

Belongs to the bacterial histone-like protein family. In terms of assembly, heterodimer of an alpha and a beta chain.

Its function is as follows. This protein is one of the two subunits of integration host factor, a specific DNA-binding protein that functions in genetic recombination as well as in transcriptional and translational control. In Shewanella amazonensis (strain ATCC BAA-1098 / SB2B), this protein is Integration host factor subunit alpha.